The chain runs to 175 residues: NADH dehydrogenase [ubiquinone] 1 alpha subcomplex assembly factor 4 (175 aa).

Gly-2 carries the N-myristoyl glycine lipid modification. A Phosphoserine modification is found at Ser-35.

Belongs to the NDUFAF4 family. In terms of assembly, binds calmodulin. Interacts with NDUFAF3. (Microbial infection) Interacts with the vesicular stomatitis virus matrix protein/M; the interaction inhibits viral propagation. Post-translationally, phosphorylated on serine. Prolactin stimulate serine phosphorylation.

It localises to the mitochondrion. Its subcellular location is the membrane. Functionally, involved in the assembly of mitochondrial NADH:ubiquinone oxidoreductase complex (complex I). May be involved in cell proliferation and survival of hormone-dependent tumor cells. May be a regulator of breast tumor cell invasion. In Homo sapiens (Human), this protein is NADH dehydrogenase [ubiquinone] 1 alpha subcomplex assembly factor 4.